A 940-amino-acid chain; its full sequence is UvrABC system protein A (940 aa).

31–38 (GLSGSGKS) provides a ligand contact to ATP. The C4-type zinc finger occupies 253–280 (CPICGYSMRELEPRLFSFNNPAGACPTC). 2 ABC transporter domains span residues 310–587 (WDRR…PESL) and 607–937 (ANPE…RFLK). 640-647 (GVSGSGKS) contacts ATP. The C4-type zinc-finger motif lies at 740-766 (CEACQGDGVIKVEMHFLPDIYVPCDQC).

Belongs to the ABC transporter superfamily. UvrA family. Forms a heterotetramer with UvrB during the search for lesions.

It is found in the cytoplasm. Its function is as follows. The UvrABC repair system catalyzes the recognition and processing of DNA lesions. UvrA is an ATPase and a DNA-binding protein. A damage recognition complex composed of 2 UvrA and 2 UvrB subunits scans DNA for abnormalities. When the presence of a lesion has been verified by UvrB, the UvrA molecules dissociate. The polypeptide is UvrABC system protein A (Escherichia coli O6:H1 (strain CFT073 / ATCC 700928 / UPEC)).